The chain runs to 303 residues: Methionyl-tRNA formyltransferase (303 aa).

108–111 (SDLP) provides a ligand contact to (6S)-5,6,7,8-tetrahydrofolate.

Belongs to the Fmt family.

The catalysed reaction is L-methionyl-tRNA(fMet) + (6R)-10-formyltetrahydrofolate = N-formyl-L-methionyl-tRNA(fMet) + (6S)-5,6,7,8-tetrahydrofolate + H(+). Functionally, attaches a formyl group to the free amino group of methionyl-tRNA(fMet). The formyl group appears to play a dual role in the initiator identity of N-formylmethionyl-tRNA by promoting its recognition by IF2 and preventing the misappropriation of this tRNA by the elongation apparatus. This chain is Methionyl-tRNA formyltransferase, found in Rickettsia peacockii (strain Rustic).